The primary structure comprises 161 residues: Protein PLANT CADMIUM RESISTANCE 12 (161 aa).

A helical membrane pass occupies residues 71–89 (AGLIHLALGFIGCSWLYAF).

Belongs to the cornifelin family.

The protein resides in the membrane. May be involved in heavy metals transport. This chain is Protein PLANT CADMIUM RESISTANCE 12 (PCR12), found in Arabidopsis thaliana (Mouse-ear cress).